Consider the following 623-residue polypeptide: MGEKQRKLLVLYASQTGNALDAAERIGREAERRGLPASVVSTDEFDTSSLPHHEEAVVFVVSTTGQGDSPDSFKAFWRFLLQRNLGNYWLQQVRYAVFGLGDSGYQKYNFVAKKLDKRLSDLGATTIIEKGLGDDQHPSGYEGTLDPWMLSLWRTLYQINPKYFPKGPDVKIPQDEVIDKPKYRILFHKQEKLEPKLLSDSDIIQRARGMSPGKLFKDKSKPDCFLKMTRNEVLTKAESTKDVRHFEFQFVSSTIEYEVGDVVELLPSQNSSVVDAFIERCGLDPESFITVGPRETENSSFSEEMITQIPIKLKTFVELTMDVTSASPRRYFFEIMSFYATAEHEKERLQYFASPEGRDDLYNYNQKERRSILEVLEDFPSVQIPFDWLVQLVPPLKPRAFSISSSPLAHPAAVHLTVSIVSWITPYKRTRKGLCSSWLASLAPEQEVNIPVWFHKGSLPAPSQSLPLILVGPGTGCAPFRGFIAERAVQAQSSPVAPVMFFFGCRNKDTDFLYRDFWESHAREGGMLSEGKGGGFYTAFSRDQPKKVYVQHKIREMSKRVWDLLCDGAAVYVAGSSTKMPCDVMSAFEDIVSEETGGGSKEVASRWLKALEKTGRYNVEAWS.

Positions 8-153 constitute a Flavodoxin-like domain; that stretch reads LLVLYASQTG…TLDPWMLSLW (146 aa). Residues 14 to 19, 62 to 65, and Asp-135 each bind FMN; these read SQTGNA and STTG. The region spanning 221-467 is the FAD-binding FR-type domain; the sequence is KPDCFLKMTR…SLPAPSQSLP (247 aa). FAD-binding positions include Arg-369, 399-402, and 433-436; these read RAFS and GLCS. NADP(+) contacts are provided by residues Thr-475, 541–542, 547–551, and Asp-583; these read SR and KVYVQ. Trp-622 is an FAD binding site.

It belongs to the NADPH-dependent diflavin oxidoreductase NDOR1 family. This sequence in the N-terminal section; belongs to the flavodoxin family. In the C-terminal section; belongs to the flavoprotein pyridine nucleotide cytochrome reductase family. Interacts with At5g18400. FAD is required as a cofactor. Requires FMN as cofactor. Widely expressed.

It is found in the cytoplasm. The protein localises to the nucleus. The enzyme catalyses 2 oxidized [2Fe-2S]-[protein] + NADPH = 2 reduced [2Fe-2S]-[protein] + NADP(+) + H(+). Functionally, NADPH-dependent reductase which is a central component of the cytosolic iron-sulfur (Fe-S) protein assembly (CIA) machinery. Transfers electrons from NADPH via its FAD and FMN prosthetic groups to the [2Fe-2S] cluster of the anamorsin/DRE2 homolog, another key component of the CIA machinery. In turn, this reduced cluster provides electrons for assembly of cytosolic iron-sulfur cluster proteins. Catalyzes the NADP-dependent reduction of cytochrome c, but not cytochrome P450 in vitro. Required for embryo development. The chain is NADPH-dependent diflavin oxidoreductase 1 (ATR3) from Arabidopsis thaliana (Mouse-ear cress).